Consider the following 98-residue polypeptide: Class II hydrophobin 3 (98 aa).

An N-terminal signal peptide occupies residues methionine 1–alanine 18. N-linked (GlcNAc...) asparagine glycans are attached at residues asparagine 26 and asparagine 54. 4 disulfide bridges follow: cysteine 35–cysteine 83, cysteine 44–cysteine 74, cysteine 45–cysteine 57, and cysteine 84–cysteine 95.

The protein belongs to the cerato-ulmin hydrophobin family.

It localises to the secreted. Its subcellular location is the cell wall. In terms of biological role, aerial growth, conidiation, and dispersal of filamentous fungi in the environment rely upon a capability of their secreting small amphipathic proteins called hydrophobins (HPBs) with low sequence identity. Class I can self-assemble into an outermost layer of rodlet bundles on aerial cell surfaces, conferring cellular hydrophobicity that supports fungal growth, development and dispersal; whereas Class II form highly ordered films at water-air interfaces through intermolecular interactions but contribute nothing to the rodlet structure. In Botryotinia fuckeliana, hydrophobins are not involved in conferring surface hydrophobicity to conidia and aerial hyphae and their function in sclerotia and fruiting bodies remains to be investigated. The sequence is that of Class II hydrophobin 3 from Botryotinia fuckeliana (strain B05.10) (Noble rot fungus).